Reading from the N-terminus, the 1691-residue chain is Non-structural polyprotein pORF1 (1691 aa).

The 185-residue stretch at 56–240 (VFRPEVFWNH…HDVATLRTWI (185 aa)) folds into the Alphavirus-like MT domain. Positions 60 to 240 (EVFWNHPIQR…HDVATLRTWI (181 aa)) are methyltransferase. A Y-domain region spans residues 241–439 (RTTKVVGEHP…FYAQCRRWLS (199 aa)). Cys434 and Cys481 are joined by a disulfide. Positions 442-509 (FHLDPRTLVF…EAYEGSDVDT (68 aa)) are putative protease. The segment at 510-691 (AEPATLDITG…FSPGHEWRSA (182 aa)) is zinc-binding. Zn(2+) contacts are provided by His671, Glu673, and His686. The segment at 710 to 776 (DTPLTVGLIS…GPNPNGVPQR (67 aa)) is hinge. The segment at 722-778 (LDAAPHSGGPPATATGPAVGSSDSPDPDPLPDVTDGSRPSGARPAGPNPNGVPQRRL) is disordered. In terms of domain architecture, Macro spans 773-919 (VPQRRLLHTY…LYLTELAARW (147 aa)). The segment at 783–940 (PDGAKIYVGS…NITEDTARAA (158 aa)) is X-domain. A (+)RNA virus helicase ATP-binding domain is found at 932 to 1080 (ITEDTARAAN…RPELVPTSWW (149 aa)). Positions 958–1202 (GCKVEPGVVR…ISDAIVNNFF (245 aa)) are NTPase/helicase. 973–980 (GVPGSGKS) lines the ATP pocket. The region spanning 1081–1214 (HVTHRCPADV…GGEVGHQRPS (134 aa)) is the (+)RNA virus helicase C-terminal domain. Residues 1205–1691 (GGEVGHQRPS…LTHSIMHRSE (487 aa)) form an RNA-directed RNA polymerase region. A RdRp catalytic domain is found at 1452–1563 (AMVFENDFSE…LCSEYRQSPG (112 aa)).

Belongs to the hepevirus non-structural polyprotein family. As to quaternary structure, the protease domain interacts with host EIF2AK4 (via C-terminus); this interaction inhibits dimerization of EIF2AK4 and prevents EIF2AK4-mediated phosphorylation of host EIF2A. Mg(2+) serves as cofactor. Post-translationally, ORF1 polyprotein does not seem to be processed into distinct enzymatic domains by a viral protease belonging to ORF1, but could be processed by a host serine protease like thrombin.

The protein resides in the host cytoplasm. Its subcellular location is the host perinuclear region. The catalysed reaction is RNA(n) + a ribonucleoside 5'-triphosphate = RNA(n+1) + diphosphate. The enzyme catalyses GTP + S-adenosyl-L-methionine = N(7)-methyl-GTP + S-adenosyl-L-homocysteine. Putative protease: Inhibited by chymostatin. In terms of biological role, methyltransferase: Displays a capping enzyme activity. This function is necessary since all viral RNAs are synthesized in the cytoplasm, and host capping enzymes are restricted to the nucleus. The enzymatic reaction involves a covalent link between 7-methyl-GMP and the methyltransferase, whereas eukaryotic capping enzymes form a covalent complex only with GMP. Methyltransferase catalyzes transfer of a methyl group from S-adenosylmethionine to GTP and GDP to yield m(7)GTP or m(7)GDP. GDP is a better substrate than GTP. This enzyme also displays guanylyltransferase activity to form a covalent complex, methyltransferase-m(7)GMP, from which 7-methyl-GMP is transferred to the mRNA to create the cap structure. Y-domain: Indispensable for virus replication. Its function is as follows. Putative protease: The putative protease domain although necessary for replication of the virus may not be a protease but rather a structural Zn(2+)-binding domain. Inhibits induction of IFN-beta by MDA5 and RIG-I pathways and down-regulates the expression of MDA5. Functionally, NTPase/helicase: Multi-functional protein that exhibits NTPase and RNA unwinding activities. Hydrolyzes all NTPs efficiently and unwinds RNA duplexes containing 5' overhangs. Possesses a sequence independent RNA-5'-triphosphatase (RTPase) activity suggestive of its role in forming viral cap structure. Also participates in viral genome replication, RNA translocation and genome packaging/unpackaging. In terms of biological role, RNA-directed RNA polymerase: Plays an essential role in the virus replication. Binds to the 3'-end of the genomic RNA to initiate viral replication. This is Non-structural polyprotein pORF1 from Bandicota bengalensis (lesser bandicoot rat).